A 119-amino-acid chain; its full sequence is Methylglyoxal synthase (119 aa).

One can recognise an MGS-like domain in the interval 1–119; the sequence is MRIALIAHDK…GTADLIIKQF (119 aa). Substrate-binding positions include His-8, Lys-12, 34–37, and 54–55; these read TGTT and SG. Catalysis depends on Asp-60, which acts as the Proton donor/acceptor. His-87 contacts substrate.

It belongs to the methylglyoxal synthase family.

It carries out the reaction dihydroxyacetone phosphate = methylglyoxal + phosphate. Its function is as follows. Catalyzes the formation of methylglyoxal from dihydroxyacetone phosphate. The chain is Methylglyoxal synthase from Clostridium botulinum (strain Eklund 17B / Type B).